Consider the following 164-residue polypeptide: C-type lectin 1 (164 aa).

The signal sequence occupies residues 1-23 (MGRFLFASLGLLVVAFSLSGTGA). 3 disulfide bridges follow: Cys-27/Cys-38, Cys-55/Cys-154, and Cys-129/Cys-146. The C-type lectin domain occupies 34-155 (YNVSCYKLFY…CTLLHPFLCQ (122 aa)). N-linked (GlcNAc...) asparagine glycosylation is found at Asn-35 and Asn-109. A Mannose-binding motif is present at residues 119-121 (EPN). Ca(2+) is bound by residues Glu-127, Asn-142, and Asp-143.

This sequence belongs to the true venom lectin family. Expressed by the venom gland.

It localises to the secreted. Functionally, mannose-binding lectin which recognizes specific carbohydrate structures and agglutinates a variety of animal cells by binding to cell-surface glycoproteins and glycolipids. May be a calcium-dependent lectin. The polypeptide is C-type lectin 1 (Hydrophis hardwickii (Hardwick's spine-bellied seasnake)).